The chain runs to 197 residues: Peptidyl-tRNA hydrolase (197 aa).

Tyr21 provides a ligand contact to tRNA. The Proton acceptor role is filled by His26. TRNA contacts are provided by Tyr72, Asn74, and Asn120.

This sequence belongs to the PTH family. Monomer.

The protein localises to the cytoplasm. The catalysed reaction is an N-acyl-L-alpha-aminoacyl-tRNA + H2O = an N-acyl-L-amino acid + a tRNA + H(+). Hydrolyzes ribosome-free peptidyl-tRNAs (with 1 or more amino acids incorporated), which drop off the ribosome during protein synthesis, or as a result of ribosome stalling. In terms of biological role, catalyzes the release of premature peptidyl moieties from peptidyl-tRNA molecules trapped in stalled 50S ribosomal subunits, and thus maintains levels of free tRNAs and 50S ribosomes. This chain is Peptidyl-tRNA hydrolase, found in Saccharophagus degradans (strain 2-40 / ATCC 43961 / DSM 17024).